The primary structure comprises 176 residues: Ribosome maturation factor RimM (176 aa).

One can recognise a PRC barrel domain in the interval 100-173; that stretch reads KDEYHYHDLI…WLLINPPPGL (74 aa).

This sequence belongs to the RimM family. Binds ribosomal protein uS19.

It localises to the cytoplasm. Its function is as follows. An accessory protein needed during the final step in the assembly of 30S ribosomal subunit, possibly for assembly of the head region. Essential for efficient processing of 16S rRNA. May be needed both before and after RbfA during the maturation of 16S rRNA. It has affinity for free ribosomal 30S subunits but not for 70S ribosomes. The chain is Ribosome maturation factor RimM from Prochlorococcus marinus (strain NATL1A).